We begin with the raw amino-acid sequence, 212 residues long: Large ribosomal subunit protein uL3 (212 aa).

Q152 bears the N5-methylglutamine mark.

This sequence belongs to the universal ribosomal protein uL3 family. As to quaternary structure, part of the 50S ribosomal subunit. Forms a cluster with proteins L14 and L19. In terms of processing, methylated by PrmB.

In terms of biological role, one of the primary rRNA binding proteins, it binds directly near the 3'-end of the 23S rRNA, where it nucleates assembly of the 50S subunit. In Chromohalobacter salexigens (strain ATCC BAA-138 / DSM 3043 / CIP 106854 / NCIMB 13768 / 1H11), this protein is Large ribosomal subunit protein uL3.